The sequence spans 381 residues: Fe-S cluster assembly protein DRE2 (381 aa).

An N-terminal SAM-like domain region spans residues 8-165 (AQGSGRFLLL…KPDFGAQQAV (158 aa)). The disordered stretch occupies residues 100 to 134 (RNRDNQIWGSGSDSAAGLGSSDGDGGGGEKMSSSE). Positions 108–118 (GSGSDSAAGLG) are enriched in low complexity. Residues 119-128 (SSDGDGGGGE) show a composition bias toward gly residues. The interval 166-273 (PLKLGRKKNL…EEELLGEYDM (108 aa)) is linker. Residues Cys-283, Cys-294, Cys-297, and Cys-299 each contribute to the [2Fe-2S] cluster site. The fe-S binding site A stretch occupies residues 283 to 299 (CRPKAGKRRRACKDCTC). [4Fe-4S] cluster-binding residues include Cys-344, Cys-347, Cys-355, and Cys-358. Short sequence motifs (cx2C motif) lie at residues 344–347 (CGNC) and 355–358 (CDGC). Residues 344 to 358 (CGNCALGDAFRCDGC) form a fe-S binding site B region.

This sequence belongs to the anamorsin family. In terms of assembly, monomer. Interacts with TAH18. Interacts with MIA40. [2Fe-2S] cluster is required as a cofactor. The cofactor is [4Fe-4S] cluster.

It is found in the cytoplasm. It localises to the mitochondrion intermembrane space. Its function is as follows. Component of the cytosolic iron-sulfur (Fe-S) protein assembly (CIA) machinery required for the maturation of extramitochondrial Fe-S proteins. Part of an electron transfer chain functioning in an early step of cytosolic Fe-S biogenesis, facilitating the de novo assembly of a [4Fe-4S] cluster on the scaffold complex CFD1-NBP35. Electrons are transferred to DRE2 from NADPH via the FAD- and FMN-containing protein TAH18. TAH18-DRE2 are also required for the assembly of the diferric tyrosyl radical cofactor of ribonucleotide reductase (RNR), probably by providing electrons for reduction during radical cofactor maturation in the catalytic small subunit RNR2. The protein is Fe-S cluster assembly protein DRE2 of Paracoccidioides brasiliensis (strain Pb18).